The primary structure comprises 355 residues: 3-dehydroquinate synthase (355 aa).

Residues 71–76 (EGEERK), 105–109 (GVVGD), 129–130 (TS), Lys142, and Lys151 contribute to the NAD(+) site. Residues Glu184, His246, and His263 each contribute to the Zn(2+) site.

This sequence belongs to the sugar phosphate cyclases superfamily. Dehydroquinate synthase family. The cofactor is NAD(+). Requires Co(2+) as cofactor. It depends on Zn(2+) as a cofactor.

The protein localises to the cytoplasm. The enzyme catalyses 7-phospho-2-dehydro-3-deoxy-D-arabino-heptonate = 3-dehydroquinate + phosphate. The protein operates within metabolic intermediate biosynthesis; chorismate biosynthesis; chorismate from D-erythrose 4-phosphate and phosphoenolpyruvate: step 2/7. Catalyzes the conversion of 3-deoxy-D-arabino-heptulosonate 7-phosphate (DAHP) to dehydroquinate (DHQ). The protein is 3-dehydroquinate synthase of Streptococcus pneumoniae serotype 4 (strain ATCC BAA-334 / TIGR4).